The sequence spans 282 residues: uncharacterized protein (282 aa).

This is an uncharacterized protein from Mycoplasma pneumoniae (strain ATCC 29342 / M129 / Subtype 1) (Mycoplasmoides pneumoniae).